Reading from the N-terminus, the 194-residue chain is Probable nicotinate-nucleotide adenylyltransferase (194 aa).

This sequence belongs to the NadD family.

It catalyses the reaction nicotinate beta-D-ribonucleotide + ATP + H(+) = deamido-NAD(+) + diphosphate. The protein operates within cofactor biosynthesis; NAD(+) biosynthesis; deamido-NAD(+) from nicotinate D-ribonucleotide: step 1/1. In terms of biological role, catalyzes the reversible adenylation of nicotinate mononucleotide (NaMN) to nicotinic acid adenine dinucleotide (NaAD). The sequence is that of Probable nicotinate-nucleotide adenylyltransferase from Christiangramia forsetii (strain DSM 17595 / CGMCC 1.15422 / KT0803) (Gramella forsetii).